We begin with the raw amino-acid sequence, 207 residues long: Early nodulin-like protein 11 (207 aa).

An N-terminal signal peptide occupies residues 1 to 24; sequence MVSLISIVSVVFLLFTTFYHFGEA. In terms of domain architecture, Phytocyanin spans 25–130; sequence RIINVGGSLD…GEKVTVVVQS (106 aa). An N-linked (GlcNAc...) asparagine glycan is attached at Asn-43. A disulfide bridge connects residues Cys-83 and Cys-118. Residues 129–179 are disordered; sequence QSPNHPKPGPAAVTPTLPPKPSTTPAAPAPAPPTPSPKSSTSTMAPAPAPA. A compositionally biased stretch (pro residues) spans 144–164; sequence TLPPKPSTTPAAPAPAPPTPS. A compositionally biased stretch (low complexity) spans 165–179; the sequence is PKSSTSTMAPAPAPA. Ser-181 is lipidated: GPI-anchor amidated serine. Residues 182–207 constitute a propeptide, removed in mature form; the sequence is SAVGLVAGNGIFWASTLVAVIGLAFA.

This sequence belongs to the early nodulin-like (ENODL) family. As to expression, confined to flowers and siliques.

The protein resides in the cell membrane. Its function is as follows. May act as a carbohydrate transporter. Required, together with ENODL11, ENODL12, ENODL13, ENODL14 and ENODL15, for male-female communication and pollen tube reception and burst at the synergid cell surface of the female gametophyte. The sequence is that of Early nodulin-like protein 11 from Arabidopsis thaliana (Mouse-ear cress).